A 205-amino-acid chain; its full sequence is Putative 3-methyladenine DNA glycosylase (205 aa).

Belongs to the DNA glycosylase MPG family.

This Mycolicibacterium paratuberculosis (strain ATCC BAA-968 / K-10) (Mycobacterium paratuberculosis) protein is Putative 3-methyladenine DNA glycosylase.